We begin with the raw amino-acid sequence, 90 residues long: Lectin-1 (90 aa).

A Pyrrolidone carboxylic acid modification is found at glutamine 1. Residues cysteine 46 and cysteine 71 are joined by a disulfide bond.

In terms of processing, the N-terminus is blocked. Contains seven disulfide bonds. Post-translationally, proteolytically cleaved. Major form may consist of cleaved, disulfide-bonded subunits.

Functionally, lectin with specificity for complex N-linked glycans and O-linked glycans. Has hemagglutinating activity towards rabbit erythrocytes that is inhibited by N-acetyl-D-galactosamine. This chain is Lectin-1, found in Hypnea cervicornis (Brazilian red alga).